Here is a 525-residue protein sequence, read N- to C-terminus: Glucose-6-phosphate isomerase (525 aa).

The active-site Proton donor is Glu356. Residues His387 and Lys502 contribute to the active site.

Belongs to the GPI family.

It is found in the cytoplasm. It catalyses the reaction alpha-D-glucose 6-phosphate = beta-D-fructose 6-phosphate. Its pathway is carbohydrate biosynthesis; gluconeogenesis. The protein operates within carbohydrate degradation; glycolysis; D-glyceraldehyde 3-phosphate and glycerone phosphate from D-glucose: step 2/4. In terms of biological role, catalyzes the reversible isomerization of glucose-6-phosphate to fructose-6-phosphate. The chain is Glucose-6-phosphate isomerase from Treponema denticola (strain ATCC 35405 / DSM 14222 / CIP 103919 / JCM 8153 / KCTC 15104).